The following is a 342-amino-acid chain: S-adenosylmethionine:tRNA ribosyltransferase-isomerase (342 aa).

It belongs to the QueA family. Monomer.

The protein localises to the cytoplasm. It carries out the reaction 7-aminomethyl-7-carbaguanosine(34) in tRNA + S-adenosyl-L-methionine = epoxyqueuosine(34) in tRNA + adenine + L-methionine + 2 H(+). Its pathway is tRNA modification; tRNA-queuosine biosynthesis. In terms of biological role, transfers and isomerizes the ribose moiety from AdoMet to the 7-aminomethyl group of 7-deazaguanine (preQ1-tRNA) to give epoxyqueuosine (oQ-tRNA). This is S-adenosylmethionine:tRNA ribosyltransferase-isomerase from Streptococcus sanguinis (strain SK36).